The following is a 257-amino-acid chain: uncharacterized protein (257 aa).

Residues Asp-34, Asp-60, Val-61, Asn-87, Tyr-152, and Lys-156 each coordinate NAD(+). Tyr-152 functions as the Proton acceptor in the catalytic mechanism.

It belongs to the short-chain dehydrogenases/reductases (SDR) family.

This is an uncharacterized protein from Bacillus subtilis (strain 168).